The sequence spans 450 residues: Protein tailless (450 aa).

A DNA-binding region (nuclear receptor) is located at residues 31–108; it reads HVPCKVCRDH…VGMNKDAVQH (78 aa). 2 consecutive NR C4-type zinc fingers follow at residues 34 to 54 and 70 to 96; these read CKVC…CDGC and CKSQ…LRKC. The region spanning 187–448 is the NR LBD domain; the sequence is VPRVPHHPVH…RLISDMYSQR (262 aa).

It belongs to the nuclear hormone receptor family. NR2 subfamily. As to quaternary structure, monomer.

It is found in the nucleus. In terms of biological role, orphan receptor that binds DNA as a monomer to hormone response elements (HRE) containing an extended core motif half-site sequence 5'-AAGTCA-3' in which the 5' flanking nucleotides participate in determining receptor specificity. This receptor binds to the consensus sequence [AG][AG]AAGTCAA. Plays a key role in the establishment of non-metameric domains at the anterior and posterior poles of the embryo. It may also play a role in the nervous system. The maternal terminal pathway activates the tll gene in the termini; TLL activity then represses segmentation and activates terminal-specific genes in these domains. Involved in the regulation of early eye development. In the embryonic visual system anlage drives cells to optic lobe as opposed to Bolwig's organ fate. This Drosophila virilis (Fruit fly) protein is Protein tailless (tll).